Consider the following 332-residue polypeptide: L-lactate dehydrogenase A chain (332 aa).

NAD(+)-binding positions include 29–57 (GMVGMASAISILLKDLCDELAMVDVMEDK) and R99. Residues R106, N138, and R169 each contribute to the substrate site. N138 provides a ligand contact to NAD(+). H193 functions as the Proton acceptor in the catalytic mechanism. T248 contributes to the substrate binding site.

Belongs to the LDH/MDH superfamily. LDH family. Homotetramer.

Its subcellular location is the cytoplasm. The catalysed reaction is (S)-lactate + NAD(+) = pyruvate + NADH + H(+). It functions in the pathway fermentation; pyruvate fermentation to lactate; (S)-lactate from pyruvate: step 1/1. In terms of biological role, interconverts simultaneously and stereospecifically pyruvate and lactate with concomitant interconversion of NADH and NAD(+). The polypeptide is L-lactate dehydrogenase A chain (ldha) (Eleginops maclovinus (Patagonian blennie)).